Here is a 469-residue protein sequence, read N- to C-terminus: Putative dipeptidase SE_1424 (469 aa).

Zn(2+) is bound at residue His84. Asp86 is an active-site residue. Asp115 is a binding site for Zn(2+). The active-site Proton acceptor is the Glu149. Residues Glu150, Asp173, and His440 each contribute to the Zn(2+) site.

The protein belongs to the peptidase M20A family. Requires Zn(2+) as cofactor.

The sequence is that of Putative dipeptidase SE_1424 from Staphylococcus epidermidis (strain ATCC 12228 / FDA PCI 1200).